The following is a 1235-amino-acid chain: Serine/threonine-protein kinase TAO2 (1235 aa).

At serine 9 the chain carries Phosphoserine. The Protein kinase domain occupies 28–281 (FSDLREIGHG…SEVLLKHRFV (254 aa)). ATP-binding positions include 34 to 42 (IGHGSFGAV) and lysine 57. 106–108 (EYC) contributes to the staurosporine binding site. The Proton acceptor role is filled by aspartate 151. Glycine 155 serves as a coordination point for staurosporine. Phosphoserine is present on serine 181. Residues 318–457 (QEAPNGPGAE…PTSTSSSSAR (140 aa)) form a disordered region. The segment covering 350–374 (SSHSVPSMSISASSQSSSVNSLADA) has biased composition (low complexity). Over residues 375 to 395 (SDNEEEEEEEEEEEEEEEEEG) the composition is skewed to acidic residues. Positions 396-411 (PESREMAMMQEGEHTV) are enriched in basic and acidic residues. Serine 416 carries the post-translational modification Phosphoserine. 2 coiled-coil regions span residues 488–523 (SALREQLSGYKRMRRQHQKQLLALESRLRGEREEHS) and 576–603 (KELAALLEAQKRTYKLRKEQLKEELQEN). Position 658 is a phosphoserine (serine 658). Residues 683 to 715 (LRQHEATRELELRQLQAVQRTRAELTRLQHQTE) adopt a coiled-coil conformation. 3 positions are modified to phosphoserine: serine 777, serine 825, and serine 827. The segment at 892–941 (GPVLTPVPEEEEEEEEEGGAPIGTPRDPGDGCPSPDIPPEPPPSHLRQYP) is disordered. Residues 899–909 (PEEEEEEEEEG) show a composition bias toward acidic residues. A compositionally biased stretch (pro residues) spans 926–935 (PDIPPEPPPS). Helical transmembrane passes span 967–987 (LLPLLLLLLLPLLAAQGGGGL), 989–1009 (AALLALEVGLVGLGASYLFLC), and 1014–1034 (LPPSLFLLLAQGTALGAVLSL). Phosphoserine is present on arginine 1038. Transmembrane regions (helical) follow at residues 1040 to 1060 (LMGVPLGLGAAWLLAWPSLAL) and 1170 to 1190 (LASCLPPWAVHILASWGLLKG). A disordered region spans residues 1210 to 1235 (SASRQLPPGTVAGRRSQTRRALPPWR).

Belongs to the protein kinase superfamily. STE Ser/Thr protein kinase family. STE20 subfamily. Self-associates. Interacts with MAP2K3 and MAP2K6. Interacts with tubulins. Interacts with MAP3K7 and interferes with MAP3K7-binding to CHUK and thus prevents NF-kappa-B activation. Isoform 2 interacts with PCDH8; this complex may also include CDH2. Mg(2+) is required as a cofactor. Autophosphorylated. Phosphorylated by ATM. In terms of processing, phosphorylated on Ser-1038 by MAPK14. This phosphorylation is required PCDH8 for endocytosis.

Its subcellular location is the cytoplasmic vesicle membrane. The protein resides in the cytoplasm. It is found in the cytoskeleton. The protein localises to the cell projection. It localises to the dendrite. It catalyses the reaction L-seryl-[protein] + ATP = O-phospho-L-seryl-[protein] + ADP + H(+). It carries out the reaction L-threonyl-[protein] + ATP = O-phospho-L-threonyl-[protein] + ADP + H(+). With respect to regulation, moderately inhibited by staurosporine, a broad-range protein kinase inhibitor. Functionally, serine/threonine-protein kinase involved in different processes such as membrane blebbing and apoptotic bodies formation DNA damage response and MAPK14/p38 MAPK stress-activated MAPK cascade. Phosphorylates itself, MBP, activated MAPK8, MAP2K3, MAP2K6 and tubulins. Activates the MAPK14/p38 MAPK signaling pathway through the specific activation and phosphorylation of the upstream MAP2K3 and MAP2K6 kinases. In response to DNA damage, involved in the G2/M transition DNA damage checkpoint by activating the p38/MAPK14 stress-activated MAPK cascade, probably by mediating phosphorylation of upstream MAP2K3 and MAP2K6 kinases. May affect microtubule organization and stability. May play a role in the osmotic stress-MAPK8 pathway. Prevents MAP3K7-mediated activation of CHUK, and thus NF-kappa-B activation. Isoform 2, but not isoform 1, is required for PCDH8 endocytosis. Following homophilic interactions between PCDH8 extracellular domains, isoform 2 phosphorylates and activates MAPK14/p38 MAPK which in turn phosphorylates isoform 2. This process leads to PCDH8 endocytosis and CDH2 cointernalization. Both isoforms are involved in MAPK14/p38 MAPK activation. This Rattus norvegicus (Rat) protein is Serine/threonine-protein kinase TAO2 (Taok2).